We begin with the raw amino-acid sequence, 332 residues long: Protoheme IX farnesyltransferase (332 aa).

7 helical membrane passes run 63–83, 109–129, 132–152, 160–180, 188–208, 245–265, and 286–306; these read LICTLGGGALAAAAAGALNCL, TVFLGAVSCTLAAAMLLISGV, LAAGLTLLGLCSYVILYTIIL, IVFGGVAGAIPPLVGASAATG, WLFSLVMLWTPAHFWALAILL, ILGVFALPEGGILYLIMLLPF, and AKGLFRWSILYMFGICLLLLI.

Belongs to the UbiA prenyltransferase family. Protoheme IX farnesyltransferase subfamily.

It localises to the cell inner membrane. The enzyme catalyses heme b + (2E,6E)-farnesyl diphosphate + H2O = Fe(II)-heme o + diphosphate. The protein operates within porphyrin-containing compound metabolism; heme O biosynthesis; heme O from protoheme: step 1/1. In terms of biological role, converts heme B (protoheme IX) to heme O by substitution of the vinyl group on carbon 2 of heme B porphyrin ring with a hydroxyethyl farnesyl side group. The chain is Protoheme IX farnesyltransferase from Prochlorococcus marinus subsp. pastoris (strain CCMP1986 / NIES-2087 / MED4).